The sequence spans 455 residues: 12S seed storage protein CRB (455 aa).

Positions 1-24 (MGRVSSIISFSLTLLILFNGYTAQ) are cleaved as a signal peptide. 2 disulfides stabilise this stretch: Cys-30-Cys-63 and Cys-106-Cys-276. Cupin type-1 domains are found at residues 35-229 (LNAL…ETAQ) and 282-431 (ENLD…EEAK). Position 109 is a phosphothreonine (Thr-109). A Phosphotyrosine modification is found at Tyr-299. Residues Ser-301 and Ser-367 each carry the phosphoserine modification. Phosphothreonine occurs at positions 395 and 420. Ser-436 carries the post-translational modification Phosphoserine.

It belongs to the 11S seed storage protein (globulins) family. As to quaternary structure, hexamer; each subunit is composed of an acidic and a basic chain derived from a single precursor and linked by a disulfide bond. Post-translationally, ubiquitinated. Proteolytically processed during seed maturation at a conserved Asn-Gly peptide bond by an asparaginyl endopeptidase to produce two mature polypeptides referred to as alpha and beta subunits that are joined together by a disulfide bond. In terms of processing, phosphorylated in seeds on some Tyr residues in response to abscisic acid (ABA). Accumulates in seeds 8 days after anthesis.

It localises to the protein storage vacuole. In terms of biological role, seed storage protein. This Arabidopsis thaliana (Mouse-ear cress) protein is 12S seed storage protein CRB (CRB).